A 125-amino-acid polypeptide reads, in one-letter code: UPF0102 protein mlr4633 (125 aa).

This sequence belongs to the UPF0102 family.

This Mesorhizobium japonicum (strain LMG 29417 / CECT 9101 / MAFF 303099) (Mesorhizobium loti (strain MAFF 303099)) protein is UPF0102 protein mlr4633.